The following is a 336-amino-acid chain: DNA-directed RNA polymerase subunit alpha (336 aa).

The interval 1-226 (MLIAQRPTLS…ELFGLARELN (226 aa)) is alpha N-terminal domain (alpha-NTD). Residues 241 to 336 (AALAADMALP…DDAAFSDDEL (96 aa)) are alpha C-terminal domain (alpha-CTD).

The protein belongs to the RNA polymerase alpha chain family. Homodimer. The RNAP catalytic core consists of 2 alpha, 1 beta, 1 beta' and 1 omega subunit. When a sigma factor is associated with the core the holoenzyme is formed, which can initiate transcription.

The catalysed reaction is RNA(n) + a ribonucleoside 5'-triphosphate = RNA(n+1) + diphosphate. DNA-dependent RNA polymerase catalyzes the transcription of DNA into RNA using the four ribonucleoside triphosphates as substrates. The polypeptide is DNA-directed RNA polymerase subunit alpha (Paenarthrobacter aurescens (strain TC1)).